The following is a 101-amino-acid chain: Small ribosomal subunit protein uS14 (101 aa).

Belongs to the universal ribosomal protein uS14 family. Part of the 30S ribosomal subunit. Contacts proteins S3 and S10.

Binds 16S rRNA, required for the assembly of 30S particles and may also be responsible for determining the conformation of the 16S rRNA at the A site. The polypeptide is Small ribosomal subunit protein uS14 (Blochmanniella pennsylvanica (strain BPEN)).